We begin with the raw amino-acid sequence, 198 residues long: Prostamide/prostaglandin F synthase (198 aa).

Position 108 is a phosphotyrosine (tyrosine 108).

Belongs to the peroxiredoxin-like PRXL2 family. Prostamide/prostaglandin F synthase subfamily.

The protein localises to the cytoplasm. Its subcellular location is the cytosol. It catalyses the reaction prostaglandin H2 + [thioredoxin]-dithiol = prostaglandin F2alpha + [thioredoxin]-disulfide. The enzyme catalyses prostamide F2alpha + [thioredoxin]-disulfide = prostamide H2 + [thioredoxin]-dithiol. Catalyzes the reduction of prostaglandin-ethanolamide H(2) (prostamide H(2)) to prostamide F(2alpha) with NADPH as proton donor. Also able to reduce prostaglandin H(2) to prostaglandin F(2alpha). This Pongo abelii (Sumatran orangutan) protein is Prostamide/prostaglandin F synthase (PRXL2B).